We begin with the raw amino-acid sequence, 402 residues long: Putative polyketide beta-ketoacyl synthase 2 (402 aa).

Disordered stretches follow at residues 1–30 (MTPV…WAPR) and 188–222 (VEPR…FDRD). The Ketosynthase family 3 (KS3) domain occupies 1–400 (MTPVAVTGMG…GFNSALVVRA (400 aa)). Positions 192 to 205 (SAPGAGSPSSPAGG) are enriched in low complexity.

The protein belongs to the thiolase-like superfamily. Beta-ketoacyl-ACP synthases family.

It participates in antifungal biosynthesis; monensin biosynthesis. The polypeptide is Putative polyketide beta-ketoacyl synthase 2 (Streptomyces virginiae (Streptomyces cinnamonensis)).